The sequence spans 345 residues: L-threonine 3-dehydrogenase (345 aa).

A Zn(2+)-binding site is contributed by cysteine 39. Residues threonine 41 and histidine 44 each act as charge relay system in the active site. 6 residues coordinate Zn(2+): histidine 64, glutamate 65, cysteine 94, cysteine 97, cysteine 100, and cysteine 108. Residues isoleucine 176, aspartate 196, arginine 201, 263–265, and 287–288 contribute to the NAD(+) site; these read LGI and VY.

It belongs to the zinc-containing alcohol dehydrogenase family. As to quaternary structure, homotetramer. Zn(2+) is required as a cofactor.

The protein localises to the cytoplasm. It catalyses the reaction L-threonine + NAD(+) = (2S)-2-amino-3-oxobutanoate + NADH + H(+). Its pathway is amino-acid degradation; L-threonine degradation via oxydo-reductase pathway; glycine from L-threonine: step 1/2. In terms of biological role, catalyzes the NAD(+)-dependent oxidation of L-threonine to 2-amino-3-ketobutyrate. This Anaeromyxobacter sp. (strain K) protein is L-threonine 3-dehydrogenase.